Here is a 101-residue protein sequence, read N- to C-terminus: MMLEHVLVLSAYLFSIGIYGLITSRNMVRALMCLELILNAVNLNFVTFSDFFDSRQLKGNIFSIFVIAIAAAEAAIGPAIVSAIYRNRKSIHINQSNLLNK.

The next 3 membrane-spanning stretches (helical) occupy residues 2 to 22, 32 to 52, and 61 to 81; these read MLEHVLVLSAYLFSIGIYGLI, MCLELILNAVNLNFVTFSDFF, and IFSIFVIAIAAAEAAIGPAIV.

The protein belongs to the complex I subunit 4L family. NDH is composed of at least 16 different subunits, 5 of which are encoded in the nucleus.

It localises to the plastid. The protein localises to the chloroplast thylakoid membrane. It carries out the reaction a plastoquinone + NADH + (n+1) H(+)(in) = a plastoquinol + NAD(+) + n H(+)(out). The enzyme catalyses a plastoquinone + NADPH + (n+1) H(+)(in) = a plastoquinol + NADP(+) + n H(+)(out). In terms of biological role, NDH shuttles electrons from NAD(P)H:plastoquinone, via FMN and iron-sulfur (Fe-S) centers, to quinones in the photosynthetic chain and possibly in a chloroplast respiratory chain. The immediate electron acceptor for the enzyme in this species is believed to be plastoquinone. Couples the redox reaction to proton translocation, and thus conserves the redox energy in a proton gradient. The chain is NAD(P)H-quinone oxidoreductase subunit 4L, chloroplastic from Manihot esculenta (Cassava).